The following is a 118-amino-acid chain: Ribosome-binding factor A (118 aa).

This sequence belongs to the RbfA family. As to quaternary structure, monomer. Binds 30S ribosomal subunits, but not 50S ribosomal subunits or 70S ribosomes.

The protein localises to the cytoplasm. In terms of biological role, one of several proteins that assist in the late maturation steps of the functional core of the 30S ribosomal subunit. Associates with free 30S ribosomal subunits (but not with 30S subunits that are part of 70S ribosomes or polysomes). Required for efficient processing of 16S rRNA. May interact with the 5'-terminal helix region of 16S rRNA. In Bacillus cereus (strain ATCC 10987 / NRS 248), this protein is Ribosome-binding factor A.